The chain runs to 173 residues: Pyrimidine operon regulatory protein (173 aa).

Residues Thr-40 to Arg-41, Asp-97 to Thr-105, and Arg-130 contribute to the substrate site. The short motif at Val-93–Thr-105 is the PRPP-binding element.

This sequence belongs to the purine/pyrimidine phosphoribosyltransferase family. PyrR subfamily.

Functionally, regulates transcriptional attenuation of the pyrimidine nucleotide (pyr) operon in response to exogenous pyrimidines, probably by binding to specific sites on pyr mRNA. This probably disrupts an antiterminator hairpin in the RNA and favors formation of a downstream transcription terminator, leading to a reduced expression of downstream genes. The chain is Pyrimidine operon regulatory protein from Lactococcus lactis subsp. lactis (strain IL1403) (Streptococcus lactis).